The primary structure comprises 358 residues: MEAKGAAQWSSILVPSVQEMVKEKTITTVPPRYVRSDQDKTEVDDDFDVKIEIPIIDMKRLCSSTTMDSEVEKLDFACKEWGFFQLVNHGIDSSFLDKVKSEIQDFFNLPMEEKKKFWQRPDEIEGFGQAFVVSEDQKLDWADLFFHTVQPVELRKPHLFPKLPLPFRDTLEMYSSEVQSVAKILIAKMARALEIKPEELEKLFDDVDSVQSMRMNYYPPCPQPDQVIGLTPHSDSVGLTVLMQVNDVEGLQIKKDGKWVPVKPLPNAFIVNIGDVLEIITNGTYRSIEHRGVVNSEKERLSIATFHNVGMYKEVGPAKSLVERQKVARFKRLTMKEYNDGLFSRTLDGKAYLDALRI.

The region spanning S209–V309 is the Fe2OG dioxygenase domain. The Fe cation site is built by H233, D235, and H290.

The protein belongs to the iron/ascorbate-dependent oxidoreductase family. Low expression in roots and leaves.

The protein is Protein SRG1 (SRG1) of Arabidopsis thaliana (Mouse-ear cress).